The following is an 85-amino-acid chain: Protein RnfH (85 aa).

The protein belongs to the UPF0125 (RnfH) family.

This chain is Protein RnfH, found in Cereibacter sphaeroides (strain ATCC 17029 / ATH 2.4.9) (Rhodobacter sphaeroides).